The following is a 137-amino-acid chain: MRTLWIVAVCLIGVEGSLLEFGKMILEETGKLAIPSYSSYGCYCGWGGKGTPKDATDRCCFVHDCCYGNLPDCNPKSDRYKYKRVNGAIVCEKGTSCENRICECDKAAAICFRQNLNTYSKKYMLYPDFLCKGELRC.

The signal sequence occupies residues 1-16; it reads MRTLWIVAVCLIGVEG. Intrachain disulfides connect cysteine 42–cysteine 131, cysteine 44–cysteine 60, cysteine 59–cysteine 111, cysteine 65–cysteine 137, cysteine 66–cysteine 104, cysteine 73–cysteine 97, and cysteine 91–cysteine 102. Ca(2+)-binding residues include tyrosine 43, glycine 45, and glycine 47. Histidine 63 is a catalytic residue. Aspartate 64 serves as a coordination point for Ca(2+). The active site involves aspartate 105.

It belongs to the phospholipase A2 family. Group II subfamily. D49 sub-subfamily. Ca(2+) is required as a cofactor. Expressed by the venom gland.

It localises to the secreted. The catalysed reaction is a 1,2-diacyl-sn-glycero-3-phosphocholine + H2O = a 1-acyl-sn-glycero-3-phosphocholine + a fatty acid + H(+). In terms of biological role, snake venom phospholipase A2 (PLA2) that is neurotoxic. PLA2 catalyzes the calcium-dependent hydrolysis of the 2-acyl groups in 3-sn-phosphoglycerides. The protein is Basic phospholipase A2 DsM-S1 of Daboia siamensis (Eastern Russel's viper).